Reading from the N-terminus, the 333-residue chain is Electron transfer flavoprotein subunit alpha, mitochondrial (333 aa).

The transit peptide at 1 to 19 (MFRAAAPGQLRRATSLLRF) directs the protein to the mitochondrion. The segment at 20-204 (QSTLVIAEHA…GISEWLDQKL (185 aa)) is domain I. Residue Lys59 is modified to N6-acetyllysine; alternate. The residue at position 59 (Lys59) is an N6-succinyllysine; alternate. Lys62 carries the post-translational modification N6-acetyllysine. Position 69 is an N6-acetyllysine; alternate (Lys69). At Lys69 the chain carries N6-succinyllysine; alternate. The residue at position 75 (Lys75) is an N6-acetyllysine. Position 85 is an N6-acetyllysine; alternate (Lys85). Lys85 is subject to N6-succinyllysine; alternate. Thr93 bears the Phosphothreonine mark. An N6-acetyllysine mark is found at Lys101 and Lys139. Ser140 is subject to Phosphoserine. Lys158 carries the post-translational modification N6-acetyllysine; alternate. An N6-succinyllysine; alternate modification is found at Lys158. N6-acetyllysine is present on Lys164. Lys187 is subject to N6-succinyllysine. Position 203 is an N6-acetyllysine; alternate (Lys203). Lys203 bears the N6-succinyllysine; alternate mark. A domain II region spans residues 205–333 (TKSDRPELTG…PEMTELLKKK (129 aa)). At Lys216 the chain carries N6-succinyllysine. FAD is bound at residue Arg223. Lys226 and Lys232 each carry N6-acetyllysine; alternate. Residues Lys226 and Lys232 each carry the N6-succinyllysine; alternate modification. FAD is bound by residues Ser248, 263-266 (VGQT), 281-286 (SGAIQH), and Asn300. Lys301 carries the N6-succinyllysine modification. An FAD-binding site is contributed by 318–319 (DL).

It belongs to the ETF alpha-subunit/FixB family. In terms of assembly, heterodimer composed of ETFA and ETFB. Identified in a complex that contains ETFA, ETFB and ETFRF1. Interaction with ETFRF1 promotes dissociation of the bound FAD and loss of electron transfer activity. Interacts with TASOR. FAD is required as a cofactor.

It localises to the mitochondrion matrix. Functionally, heterodimeric electron transfer flavoprotein that accepts electrons from several mitochondrial dehydrogenases, including acyl-CoA dehydrogenases, glutaryl-CoA and sarcosine dehydrogenase. It transfers the electrons to the main mitochondrial respiratory chain via ETF-ubiquinone oxidoreductase (ETF dehydrogenase). Required for normal mitochondrial fatty acid oxidation and normal amino acid metabolism. In Bos taurus (Bovine), this protein is Electron transfer flavoprotein subunit alpha, mitochondrial (ETFA).